We begin with the raw amino-acid sequence, 579 residues long: Maintenance of mitochondrial morphology protein 1 (579 aa).

The Lumenal segment spans residues 1 to 43 (MQQPQQQDLQIGLPYAPVQPPIPSPAAYFAYLPSPSRWTFTQG). Residues 44-64 (LIVGQVSMVIVALLLIRYVIF) form a helical membrane-spanning segment. Residues 65–579 (EDSATALEKE…GLRNRPGFVQ (515 aa)) are Cytoplasmic-facing. Residues 150–391 (LPESADWLNV…WPRYWSLTLP (242 aa)) form the SMP-LTD domain. Disordered stretches follow at residues 309-332 (VLPTANPNPSSSSSSSATPPRSRH), 460-479 (RPSLASSRPPHVRSSSSGLR), and 558-579 (SSVLPTGAHHSSGLRNRPGFVQ). Composition is skewed to low complexity over residues 311–328 (PTANPNPSSSSSSSATPP) and 465–476 (SSRPPHVRSSSS).

Belongs to the MMM1 family. In terms of assembly, homodimer. Component of the ER-mitochondria encounter structure (ERMES) or MDM complex, composed of MMM1, MDM10, MDM12 and MDM34. An MMM1 homodimer associates with one molecule of MDM12 on each side in a pairwise head-to-tail manner, and the SMP-LTD domains of MMM1 and MDM12 generate a continuous hydrophobic tunnel for phospholipid trafficking.

It localises to the endoplasmic reticulum membrane. Component of the ERMES/MDM complex, which serves as a molecular tether to connect the endoplasmic reticulum (ER) and mitochondria. Components of this complex are involved in the control of mitochondrial shape and protein biogenesis, and function in nonvesicular lipid trafficking between the ER and mitochondria. The MDM12-MMM1 subcomplex functions in the major beta-barrel assembly pathway that is responsible for biogenesis of all outer membrane beta-barrel proteins, and acts in a late step after the SAM complex. The MDM10-MDM12-MMM1 subcomplex further acts in the TOM40-specific pathway after the action of the MDM12-MMM1 complex. Essential for establishing and maintaining the structure of mitochondria and maintenance of mtDNA nucleoids. The sequence is that of Maintenance of mitochondrial morphology protein 1 from Mycosarcoma maydis (Corn smut fungus).